Here is a 520-residue protein sequence, read N- to C-terminus: MAYFNQHQSMISKRYLTFFSKSKKKKPFSAGQLIGLILGPLLFLLTLLFFHPQDLPWEGVYVLAITLWIATWWITEAIPIAATSLLPIVLLPLGHILTPEQVSSEYGNDIIFLFLGGFILAIAMERWNLHTRVALTIINLIGASTSKILLGFMVATGFLSMFVSNTAAVMIMIPIGLAIIKEAHDLQEANTNQTSIQKFEKSLVLAIGYAGTIGGLGTLIGTPPLIILKGQYMQHFGHEISFAKWMIVGIPTVIVLLGITWLYLRYVAFRHDLKYLPGGQTLIKQKLDELGKMKYEEKVVQTIFVLASLLWITREFLLKKWEVTSSVADGTIAIFISILLFVIPAKNTEKHRRIIDWEVAKELPWGVLILFGGGLALAKGISESGLAKWLGEQLKSLNGVSPILIVIVITIFVLFLTEVTSNTATATMILPILATLSVAVGVHPLLLMAPAAMAANCAYMLPVGTPPNAIIFGSGKISIKQMASVGFWVNLISAIIIILVVYYVMPIVLGIDINQPLPLK.

14 consecutive transmembrane segments (helical) span residues 30–50 (AGQL…LLFF), 55–75 (LPWE…WWIT), 77–97 (AIPI…GHIL), 104–124 (SEYG…AIAM), 160–180 (SMFV…LAII), 207–227 (IGYA…PLII), 242–262 (FAKW…ITWL), 298–318 (KVVQ…EFLL), 323–343 (VTSS…LFVI), 362–382 (ELPW…KGIS), 399–419 (GVSP…LTEV), 428–448 (MILP…LLLM), 452–472 (AMAA…AIIF), and 491–511 (LISA…VLGI).

Belongs to the SLC13A/DASS transporter (TC 2.A.47) family. NADC subfamily.

The protein localises to the cell membrane. Mediates the transport of the dicarboxylates fumarate, malate, and succinate across the cytoplasmic membrane via a Na(+)-electrochemical gradient. The chain is Sodium-dependent dicarboxylate transporter SdcS (sdcS) from Staphylococcus aureus (strain bovine RF122 / ET3-1).